Here is a 152-residue protein sequence, read N- to C-terminus: MSTINTDTNDTMPHISVHAQYIKDLSLENPSAPSSLAALDQRPQIDLSLDINVTNLSEENFYEVELNIEAIARNEKYKLFQIELKYAGVFNLINIDSEQHPILLSVHCPAMIFPFARKIIASCTQDAGFQPLMIDPIDFGALYHKKMSEHQN.

The protein belongs to the SecB family. As to quaternary structure, homotetramer, a dimer of dimers. One homotetramer interacts with 1 SecA dimer.

The protein resides in the cytoplasm. Its function is as follows. One of the proteins required for the normal export of preproteins out of the cell cytoplasm. It is a molecular chaperone that binds to a subset of precursor proteins, maintaining them in a translocation-competent state. It also specifically binds to its receptor SecA. The protein is Protein-export protein SecB of Rickettsia massiliae (strain Mtu5).